Consider the following 393-residue polypeptide: Beta-1,3-galactosyltransferase 7 (393 aa).

Residues 9-29 (VISLKWVPFLCISFFALGAIF) form a helical; Signal-anchor for type II membrane protein membrane-spanning segment. Positions 89–112 (SLDKSVSTLSSTRSSQEMVDGSET) are disordered. Residues 93–103 (SVSTLSSTRSS) show a composition bias toward low complexity.

This sequence belongs to the glycosyltransferase 31 family. Mn(2+) is required as a cofactor. As to expression, expressed in leaves, stems, flowers and siliques.

It is found in the golgi apparatus membrane. The protein operates within protein modification; protein glycosylation. In terms of biological role, beta-1,3-galactosyltransferase that transfers galactose from UDP-galactose to substrates with a terminal glycosyl residue. The chain is Beta-1,3-galactosyltransferase 7 (B3GALT7) from Arabidopsis thaliana (Mouse-ear cress).